The chain runs to 296 residues: Phosphoribosylaminoimidazole-succinocarboxamide synthase (296 aa).

The protein belongs to the SAICAR synthetase family.

It carries out the reaction 5-amino-1-(5-phospho-D-ribosyl)imidazole-4-carboxylate + L-aspartate + ATP = (2S)-2-[5-amino-1-(5-phospho-beta-D-ribosyl)imidazole-4-carboxamido]succinate + ADP + phosphate + 2 H(+). Its pathway is purine metabolism; IMP biosynthesis via de novo pathway; 5-amino-1-(5-phospho-D-ribosyl)imidazole-4-carboxamide from 5-amino-1-(5-phospho-D-ribosyl)imidazole-4-carboxylate: step 1/2. This chain is Phosphoribosylaminoimidazole-succinocarboxamide synthase, found in Trichlorobacter lovleyi (strain ATCC BAA-1151 / DSM 17278 / SZ) (Geobacter lovleyi).